The sequence spans 464 residues: MLTKTIKDQNKFQKDSTIGSYWITTFGCQMNKADSERMAGTLEKMGYTRADDELKADLVLYNTCTIRDNAEQKVYSFLGRQAKRKHKIPSLKLVVAGCLAQQEGESLLRRVPELDLVMGPQHVNNLENLLGKVDLGNQVAATEETFISEDITNARRESSICGWVNIIYGCNERCSYCVVPSVRGKEQSRYPDAIKSEIQKLANDNFKEITLLGQNIDAYGRDLPGTTKEGRKENTLTDLLYYIHDVEGIRRIRFATSHPRYFSRRLIQACYELDKVCEHFHIPFQSGNNEILKLMARGYTIDKYKRIIENIRSLMPNASITADAIVAFPGESEEQYRDTLKLISDIGFDQVMTAAYSPRPNTPAALWHNQISEEVKKERLKEINELVETTSKQRNERYLDSIESVLIEGFNPKNSSQIMGRTRTNRLTFVEIPKNIKFNFSLGDEIDVKINEARPFSLTGILCL.

In terms of domain architecture, MTTase N-terminal spans 19-135; that stretch reads GSYWITTFGC…LENLLGKVDL (117 aa). Residues Cys28, Cys64, Cys98, Cys170, Cys174, and Cys177 each contribute to the [4Fe-4S] cluster site. Residues 156–393 enclose the Radical SAM core domain; it reads RESSICGWVN…NELVETTSKQ (238 aa). The 69-residue stretch at 396–464 folds into the TRAM domain; sequence ERYLDSIESV…PFSLTGILCL (69 aa).

It belongs to the methylthiotransferase family. MiaB subfamily. Monomer. The cofactor is [4Fe-4S] cluster.

The protein localises to the cytoplasm. The enzyme catalyses N(6)-dimethylallyladenosine(37) in tRNA + (sulfur carrier)-SH + AH2 + 2 S-adenosyl-L-methionine = 2-methylsulfanyl-N(6)-dimethylallyladenosine(37) in tRNA + (sulfur carrier)-H + 5'-deoxyadenosine + L-methionine + A + S-adenosyl-L-homocysteine + 2 H(+). Functionally, catalyzes the methylthiolation of N6-(dimethylallyl)adenosine (i(6)A), leading to the formation of 2-methylthio-N6-(dimethylallyl)adenosine (ms(2)i(6)A) at position 37 in tRNAs that read codons beginning with uridine. The chain is tRNA-2-methylthio-N(6)-dimethylallyladenosine synthase from Prochlorococcus marinus (strain MIT 9215).